A 593-amino-acid chain; its full sequence is Tyrosine-protein phosphatase non-receptor type 11 (593 aa).

Thr-2 bears the N-acetylthreonine mark. SH2 domains are found at residues Trp-6 to Leu-102 and Trp-112 to Leu-216. A phosphotyrosine mark is found at Tyr-62 and Tyr-66. The Tyrosine-protein phosphatase domain maps to Phe-247–Ala-517. Residues Asp-425, Cys-459–Arg-465, and Gln-506 each bind substrate. Cys-459 acts as the Phosphocysteine intermediate in catalysis. Phosphotyrosine; by PDGFR occurs at positions 542 and 580.

It belongs to the protein-tyrosine phosphatase family. Non-receptor class 2 subfamily. As to quaternary structure, interacts with phosphorylated SIT1, LIME1, BCAR3 and MZPL1. Interacts with FCRL4, FCRL6, ANKHD1, SHB, INPP5D/SHIP1 and CD84. Interacts with MILR1 (tyrosine-phosphorylated). Interacts with FLT1 (tyrosine-phosphorylated), FLT3 (tyrosine-phosphorylated), FLT4 (tyrosine-phosphorylated), KIT and GRB2. Interacts with PTPNS1. Interacts with KIR2DL1; the interaction is enhanced by ARRB2. Interacts (via SH2 domain) with TEK/TIE2 (tyrosine phosphorylated). Interacts with GAB2. Interacts with TERT; the interaction retains TERT in the nucleus. Interacts with PECAM1 and FER. Interacts with EPHA2 (activated); participates in PTK2/FAK1 dephosphorylation in EPHA2 downstream signaling. Interacts with PDGFRA (tyrosine phosphorylated). Interacts with PDGFRB (tyrosine phosphorylated); this interaction increases the PTPN11 phosphatase activity. Interacts with ROS1; this mediates PTPN11 phosphorylation. Interacts with CEACAM1 (via cytoplasmic domain); this interaction depends on the monomer/dimer equilibrium and is phosphorylation-dependent. Interacts with MPIG6B (via ITIM motif). Interacts with SIGLEC10. Interacts with CLEC12B (via ITIM motif); this interaction triggers dephosphorylation and activation of PTPN11. Interacts (via SH2 domains) with NEDD9/CAS-L; the interaction is enhanced when NEDD9/CAS-L is tyrosine phosphorylated. Post-translationally, phosphorylated on Tyr-542 and Tyr-580 upon receptor protein tyrosine kinase activation; which creates a binding site for GRB2 and other SH2-containing proteins. Phosphorylated upon activation of the receptor-type kinase FLT3. Phosphorylated upon activation of the receptor-type kinase PDGFRA. Phosphorylated by activated PDGFRB. As to expression, expressed in brain, muscle and lung.

It localises to the cytoplasm. The catalysed reaction is O-phospho-L-tyrosyl-[protein] + H2O = L-tyrosyl-[protein] + phosphate. Inhibited by orthovanadate, molybdate and spermidine. Functionally, acts downstream of various receptor and cytoplasmic protein tyrosine kinases to participate in the signal transduction from the cell surface to the nucleus. Positively regulates MAPK signal transduction pathway. Dephosphorylates GAB1, ARHGAP35 and EGFR. Dephosphorylates ROCK2 at 'Tyr-722' resulting in stimulation of its RhoA binding activity. Dephosphorylates CDC73. Dephosphorylates SOX9 on tyrosine residues, leading to inactivate SOX9 and promote ossification. Dephosphorylates tyrosine-phosphorylated NEDD9/CAS-L. The chain is Tyrosine-protein phosphatase non-receptor type 11 (Ptpn11) from Rattus norvegicus (Rat).